We begin with the raw amino-acid sequence, 319 residues long: Coproporphyrin III ferrochelatase 2 (319 aa).

Fe-coproporphyrin III is bound by residues Tyr-13, Arg-30, 46 to 47, Ser-54, and Tyr-125; that span reads RY. The Fe(2+) site is built by His-181 and Glu-262.

This sequence belongs to the ferrochelatase family.

Its subcellular location is the cytoplasm. The catalysed reaction is Fe-coproporphyrin III + 2 H(+) = coproporphyrin III + Fe(2+). The protein operates within porphyrin-containing compound metabolism; protoheme biosynthesis. Its function is as follows. Involved in coproporphyrin-dependent heme b biosynthesis. Catalyzes the insertion of ferrous iron into coproporphyrin III to form Fe-coproporphyrin III. This Bacillus cereus (strain ZK / E33L) protein is Coproporphyrin III ferrochelatase 2.